The sequence spans 108 residues: ATP-dependent Clp protease adapter protein ClpS (108 aa).

Basic and acidic residues predominate over residues M1–V15. A disordered region spans residues M1 to V24.

The protein belongs to the ClpS family. Binds to the N-terminal domain of the chaperone ClpA.

Involved in the modulation of the specificity of the ClpAP-mediated ATP-dependent protein degradation. The polypeptide is ATP-dependent Clp protease adapter protein ClpS (Stenotrophomonas maltophilia (strain R551-3)).